The primary structure comprises 737 residues: MTLVKYSTIAFPLRSFRLFIFVKKALYHNEPHSIDPFHDKNWIVKRPKFLNLPKNEHSKLDVFQFNFNKSKSNNVYLRDPLFRDNLDKAMQIIYNEKLSSLDAKQVPIKNLAWLKLRDSIYQQLEDPKQQTKNYVPSISEIIYPSSPGNLISLLINCNKIGNSVWKSILKNGQSNNISTLDKFIHVLQQTFDHMYEQEILPMMTNTDDTDGAHNVDITNPAEWFSEARKIRRHIIMHIGPTNSGKTYRALQKLKSVDRGYYAGPLRLLAREVYDRFQSEKVRCNLLTGEEVIRDLDDKGNPAGLTSGTVEMVPINQKFDVVVLDEIQMMSDADRGWAWTNALLGVVSKEVHLVGEKSVLPLVKSIVKMTGDKLTINEYERLGKLSVEDKPVKDGIKGLRKGDCVVAFSKKKVLDLKLKIEKDTNLKVAVIYGSLPPETRVQQAALFNNGEYDIMVASDAIGMGLNLSIDRVVFTTNMKYNGEELMEMTSSQIKQIGGRAGRFKSKSTSGGVPQGFITSFESKVLKSVRKAIESPIEYLKTAVTWPTDEICAQLMTQFPPGTPTSDLLQTISDELERSSDNLFTLSDLKSKLKVIGLFEHMEDIPFFDKLKLSNAPVKDMPMVTKAFTKFCETIAKRHTRGLLSYRLPFNLLDYNCIPNESYSLEVYESLYNIITLYFWLSNRYPNYFIDMESAKDLKYFCEMIIFEKLDRLKKNPYAHKPFGSTRGQFPSSRGRLRT.

Residues 1-25 (MTLVKYSTIAFPLRSFRLFIFVKKA) constitute a mitochondrion transit peptide. Residues 226-365 (EARKIRRHII…KSVLPLVKSI (140 aa)) enclose the Helicase ATP-binding domain. ATP is bound at residue 239 to 246 (GPTNSGKT). Residues 390–546 (PVKDGIKGLR…YLKTAVTWPT (157 aa)) form the Helicase C-terminal domain.

This sequence belongs to the helicase family.

It is found in the mitochondrion. The enzyme catalyses ATP + H2O = ADP + phosphate + H(+). Functionally, probable ATP-dependent RNA helicase involved in a variety of mitochondrial post-transcriptional processes and in translation. It is a key control element in nuclear-mitochondrial interactions. This is ATP-dependent RNA helicase SUV3, mitochondrial (SUV3) from Saccharomyces paradoxus (Yeast).